The sequence spans 215 residues: Cytochrome b-c1 complex subunit Rieske, mitochondrial (215 aa).

The transit peptide at 1–22 (MLGIRSSVKTCFKPMSLTSKRL) directs the protein to the mitochondrion. Positions 23-30 (ISQSLLAS) are cleaved as a propeptide — removed in mature form. Over 31–50 (KSTYRTPNFDDVLKENNDAD) the chain is Mitochondrial matrix. Residues 51 to 80 (KGRSYAYFMVGAMGLLSSAGAKSTVETFIS) form a helical membrane-spanning segment. The Mitochondrial intermembrane portion of the chain corresponds to 81–215 (SMTATADVLA…EFDGDKVIVG (135 aa)). The hinge stretch occupies residues 90-93 (AMAK). The region spanning 123–214 (PHEIQEANSV…YEFDGDKVIV (92 aa)) is the Rieske domain. C159, H161, C178, and H181 together coordinate [2Fe-2S] cluster. C164 and C180 are joined by a disulfide.

It belongs to the Rieske iron-sulfur protein family. As to quaternary structure, component of the ubiquinol-cytochrome c oxidoreductase (cytochrome b-c1 complex, complex III, CIII), a multisubunit enzyme composed of 10 subunits. The complex is composed of 3 respiratory subunits cytochrome b (COB), cytochrome c1 (CYT1) and Rieske protein (RIP1), 2 core protein subunits COR1 and QCR2, and 5 low-molecular weight protein subunits QCR6, QCR7, QCR8, QCR9 and QCR10. The complex exists as an obligatory dimer and forms supercomplexes (SCs) in the inner mitochondrial membrane with a monomer or a dimer of cytochrome c oxidase (complex IV, CIV), resulting in 2 different assemblies (supercomplexes III(2)IV and III(2)IV(2)). RIP1 interacts with QCR10 on the intermembrane space (IMS) side, and with QCR9. It depends on [2Fe-2S] cluster as a cofactor. Post-translationally, processed by both the mitochondrial processing peptidase (MPP) and the mitochondrial intermediate protease (MIP). Initially, MPP removes 22 amino acids from the newly imported precursor in the mitochondrial matrix. This proteolytic processing is then followed by a second proteolytic cleavage by MIP, which removes an octapeptide to generate mature-sized RIP1.

Its subcellular location is the mitochondrion inner membrane. The catalysed reaction is a quinol + 2 Fe(III)-[cytochrome c](out) = a quinone + 2 Fe(II)-[cytochrome c](out) + 2 H(+)(out). Functionally, component of the ubiquinol-cytochrome c oxidoreductase, a multisubunit transmembrane complex that is part of the mitochondrial electron transport chain which drives oxidative phosphorylation. The respiratory chain contains 3 multisubunit complexes succinate dehydrogenase (complex II, CII), ubiquinol-cytochrome c oxidoreductase (cytochrome b-c1 complex, complex III, CIII) and cytochrome c oxidase (complex IV, CIV), that cooperate to transfer electrons derived from NADH and succinate to molecular oxygen, creating an electrochemical gradient over the inner membrane that drives transmembrane transport and the ATP synthase. The cytochrome b-c1 complex catalyzes electron transfer from ubiquinol to cytochrome c, linking this redox reaction to translocation of protons across the mitochondrial inner membrane, with protons being carried across the membrane as hydrogens on the quinol. In the process called Q cycle, 2 protons are consumed from the matrix, 4 protons are released into the intermembrane space and 2 electrons are passed to cytochrome c. The Rieske protein is a catalytic core subunit containing a [2Fe-2S] iron-sulfur cluster. It cycles between 2 conformational states during catalysis to transfer electrons from the quinol bound in the Q(0) site in cytochrome b (COB) to cytochrome c1 (CYT1). This chain is Cytochrome b-c1 complex subunit Rieske, mitochondrial (RIP1), found in Saccharomyces cerevisiae (strain ATCC 204508 / S288c) (Baker's yeast).